The primary structure comprises 467 residues: Xanthan biosynthesis protein XanB (467 aa).

It belongs to the mannose-6-phosphate isomerase type 2 family.

It catalyses the reaction D-mannose 6-phosphate = D-fructose 6-phosphate. The enzyme catalyses alpha-D-mannose 1-phosphate + GTP + H(+) = GDP-alpha-D-mannose + diphosphate. The protein operates within nucleotide-sugar biosynthesis; GDP-alpha-D-mannose biosynthesis; GDP-alpha-D-mannose from alpha-D-mannose 1-phosphate (GTP route): step 1/1. Its pathway is nucleotide-sugar biosynthesis; GDP-alpha-D-mannose biosynthesis; alpha-D-mannose 1-phosphate from D-fructose 6-phosphate: step 1/2. In terms of biological role, involved in xanthan production. This Xanthomonas campestris pv. campestris (strain B100) protein is Xanthan biosynthesis protein XanB (xanB).